Consider the following 527-residue polypeptide: Succinate-semialdehyde dehydrogenase, mitochondrial (527 aa).

Residues 1-35 (MAMAMAMRRAAALGARHILAASSTSSSGVLLRRHM) constitute a mitochondrion transit peptide. Residues Arg-208, 223 to 226 (KPSE), and 276 to 281 (GSTAVG) each bind NAD(+). Position 208 (Arg-208) interacts with substrate. The active-site Proton acceptor is Glu-298. Arg-326, Cys-332, and Ser-489 together coordinate substrate. Cys-332 (nucleophile) is an active-site residue. Cys-332 and Cys-334 are disulfide-bonded.

This sequence belongs to the aldehyde dehydrogenase family. Homotetramer.

The protein resides in the mitochondrion matrix. It carries out the reaction succinate semialdehyde + NAD(+) + H2O = succinate + NADH + 2 H(+). It participates in amino-acid degradation; 4-aminobutanoate degradation. Its activity is regulated as follows. Redox-regulated. Inhibited under oxydizing conditions. Its function is as follows. Oxidizes specifically succinate semialdehyde. Involved in plant response to environmental stress by preventing the accumulation of reactive oxygen species. This is Succinate-semialdehyde dehydrogenase, mitochondrial (ALDH5F1) from Oryza sativa subsp. japonica (Rice).